A 418-amino-acid polypeptide reads, in one-letter code: Bifunctional enzyme IspD/IspF (418 aa).

Residues 1–261 (MADTPALIPQ…EFKRASDMNF (261 aa)) form a 2-C-methyl-D-erythritol 4-phosphate cytidylyltransferase region. A 2-C-methyl-D-erythritol 2,4-cyclodiphosphate synthase region spans residues 262 to 418 (RIGEGWDIHA…RATVLLRKFI (157 aa)). A divalent metal cation contacts are provided by D268 and H270. Residues 268-270 (DIH) and 294-295 (HS) each bind 4-CDP-2-C-methyl-D-erythritol 2-phosphate. Residue H302 coordinates a divalent metal cation. Residues 316–318 (DIG) and 321–325 (FPDTD) each bind 4-CDP-2-C-methyl-D-erythritol 2-phosphate.

It in the N-terminal section; belongs to the IspD/TarI cytidylyltransferase family. IspD subfamily. The protein in the C-terminal section; belongs to the IspF family. A divalent metal cation serves as cofactor.

It catalyses the reaction 2-C-methyl-D-erythritol 4-phosphate + CTP + H(+) = 4-CDP-2-C-methyl-D-erythritol + diphosphate. It carries out the reaction 4-CDP-2-C-methyl-D-erythritol 2-phosphate = 2-C-methyl-D-erythritol 2,4-cyclic diphosphate + CMP. It functions in the pathway isoprenoid biosynthesis; isopentenyl diphosphate biosynthesis via DXP pathway; isopentenyl diphosphate from 1-deoxy-D-xylulose 5-phosphate: step 2/6. It participates in isoprenoid biosynthesis; isopentenyl diphosphate biosynthesis via DXP pathway; isopentenyl diphosphate from 1-deoxy-D-xylulose 5-phosphate: step 4/6. Bifunctional enzyme that catalyzes the formation of 4-diphosphocytidyl-2-C-methyl-D-erythritol from CTP and 2-C-methyl-D-erythritol 4-phosphate (MEP) (IspD), and catalyzes the conversion of 4-diphosphocytidyl-2-C-methyl-D-erythritol 2-phosphate (CDP-ME2P) to 2-C-methyl-D-erythritol 2,4-cyclodiphosphate (ME-CPP) with a corresponding release of cytidine 5-monophosphate (CMP) (IspF). The protein is Bifunctional enzyme IspD/IspF of Albidiferax ferrireducens (strain ATCC BAA-621 / DSM 15236 / T118) (Rhodoferax ferrireducens).